Here is a 435-residue protein sequence, read N- to C-terminus: Cyclic GMP-AMP synthase-like receptor (435 aa).

ATP is bound by residues Ser70 and Glu82–Asp84. Residues Glu82, Asp84, and Asp209 each coordinate Mg(2+). Asp209 is a GTP binding site. ATP is bound by residues Lys286 and Ser300 to Lys304. Residues Leu311, Asp312, and Asp317 each coordinate Mn(2+).

Belongs to the mab-21 family. The cofactor is Mg(2+). Mn(2+) serves as cofactor.

The catalysed reaction is GTP + ATP = 2',3'-cGAMP + 2 diphosphate. It carries out the reaction GTP + ATP = pppGp(2'-5')A + diphosphate. It catalyses the reaction pppGp(2'-5')A = 2',3'-cGAMP + diphosphate. Its function is as follows. Nucleotidyltransferase that catalyzes the formation of cyclic GMP-AMP (2',3'-cGAMP) from ATP and GTP and plays a key role in innate immunity. Directly binds some unknown ligand, activating the nucleotidyltransferase activity, leading to synthesis of 2',3'-cGAMP, a second messenger that binds to and activates Sting, thereby triggering the immune response via activation of the NF-kappa-B transcription factor. The chain is Cyclic GMP-AMP synthase-like receptor from Ctenocephalides felis (Cat flea).